The following is a 288-amino-acid chain: Polyprenyl transferase eriF (288 aa).

The next 6 helical transmembrane spans lie at 24–44, 51–71, 101–121, 145–165, 215–235, and 268–288; these read ASII…TLPL, YIFL…LNQV, IAAF…LPET, CIAM…AISP, FIIT…GGIF, and FYTY…HGLI.

The protein belongs to the UbiA prenyltransferase family. Mg(2+) serves as cofactor.

It localises to the membrane. Polyprenyl transferase; part of the gene cluster that mediates the biosynthesis of erinacines, cyathane-xylosides that show unique biological activities, including leishmanicidal activity, stimulating activity for nerve growth-factor synthesis, and agonistic activity toward the kappa opioid receptor. The role of eriF within the pathway has still to be determined. The first step of the erinacines biosynthesis pathway is catalyzed by the geranylgeranyl diphosphate (GGPP) synthase eriE via conversion of farnesyl pyrophosphate and isopentyl pyrophosphate into geranylgeranyl pyrophosphate (GGPP). GGPP is then substrate of the diterpene cyclase eriG for the production of cyatha-3,12-diene. The cytochrome P450 monooxygenase eriI then hydroxylates cyatha-3,12-diene at C-14 of the seven-membered ring to produce erinacol, which is further hydroxylated at C-15 by the cytochrome P450 monooxygenase eriC to yield cyathadiol. The cytochrome P450 monooxygenase eriA then catalyzes C-11 hydroxylation in the presence of the short chain dehydrogenase/reductase (SDR) eriH, which leads to the production of cyathatriol. The acetyltransferase eriL converts cyathatriol into 11-O-acetyl-cyathatriol. The SDR eriH catalyzes further oxidation of 11-O-acetyl-cyathatriol into 1-O-acetylcyathin A3. Finally, the glycosyl transferase eriJ tranfers xylose from UDP-xylose onto C-14 of 11-O-acetyl-cyathatriol to form eracine Q. EriJ is also able to convert 11-O-acetyl-cyathatriol to eracine Q2 by using UDP-D-glucose as cosubstrate, but at a lower rate. This chain is Polyprenyl transferase eriF, found in Hericium erinaceus (Lion's mane mushroom).